The following is a 483-amino-acid chain: MVRTDDQPYVPTPIDRLFSHSYVRTQLAFQLDDVSGCATLLRRGMERLIRTSPFLSRELTIHMNDDQTESITTKPISPQELDRMLKIKHHEKPLRQALIEASNDRDCLDDKFMPTSFHRLDVSQPCPVMVVQANIHPDGVLLAVATNHMVMDATGQGIAVQCLADCCRLEQGDVVSLPTCSADQDRGRELLLHELPARIVNREFSEYRPCRDLYSQSAALADLAHKAATTIRVAHFTIAAEHVHALKTRCNEMLSQVFESNGHVFGADDAPWISSSDVVIALIWRSINCARYQALTTTQQPPEKQAKKDSGEVVHVGIPVNVRSRVSPVLPGSYMGNGAILVLVPQPLRTFSGTDWMSTICRVGLAVRTRLAAITSDEIRSLLHYILNAPDPIAFSFDVADYFVSNWRQMGFYEADFGSKMGKPQRIRNPDGVVGGTVFIMPKRSQPENAPWELQVSLTDEMLRLLDQDDVWATYVRPDTYWP.

It belongs to the fumigaclavine B O-acetyltransferase family. As to quaternary structure, monomer.

The protein operates within secondary metabolite biosynthesis. Its function is as follows. O-acetyltransferase; part of the gene cluster that mediates the biosynthesis of protubonine B, a hydroxylated and diacetylated cyclo-L-Trp-L-Leu derivative. Within the pathway, pboB catalyzes the acetylation of protubonine C at N-1 of the indoline ring to produce protubonine B. The first step of the protubonine B synthesis is performed by the nonribosomal peptide synthetase pboA that catalyzes the formation of cyclo-L-Trp-L-Leu by condensing L-Leu with L-Trp. The flavin-dependent monooxygenase pboD is responsible for hydroxylation at C-3 of the indole ring and subsequent formation of the pyrrolidine ring, leadind to protubonine D. Protubonine D is further diacetylated by two acetyltransferases, pboB and pboC, to form the final product protubonine B via protubonine C. The chain is O-acetyltransferase pboB from Aspergillus ustus.